A 757-amino-acid polypeptide reads, in one-letter code: Elongation factor G, mitochondrial (757 aa).

The region spanning 66 to 344 (DRMRNIGISA…VLDYLPCPME (279 aa)) is the tr-type G domain. Residues 75–82 (AHIDSGKT), 142–146 (DTPGH), and 196–199 (NKLD) each bind GTP.

The protein belongs to the TRAFAC class translation factor GTPase superfamily. Classic translation factor GTPase family. EF-G/EF-2 subfamily.

The protein resides in the mitochondrion. It functions in the pathway protein biosynthesis; polypeptide chain elongation. Mitochondrial GTPase that catalyzes the GTP-dependent ribosomal translocation step during translation elongation. During this step, the ribosome changes from the pre-translocational (PRE) to the post-translocational (POST) state as the newly formed A-site-bound peptidyl-tRNA and P-site-bound deacylated tRNA move to the P and E sites, respectively. Catalyzes the coordinated movement of the two tRNA molecules, the mRNA and conformational changes in the ribosome. The chain is Elongation factor G, mitochondrial from Oryza sativa subsp. japonica (Rice).